A 433-amino-acid polypeptide reads, in one-letter code: Tol-Pal system protein TolB (433 aa).

Residues 1–26 (MSLMTKLGFRALVASCLIAAGGAAHA) form the signal peptide.

This sequence belongs to the TolB family. As to quaternary structure, the Tol-Pal system is composed of five core proteins: the inner membrane proteins TolA, TolQ and TolR, the periplasmic protein TolB and the outer membrane protein Pal. They form a network linking the inner and outer membranes and the peptidoglycan layer.

Its subcellular location is the periplasm. Part of the Tol-Pal system, which plays a role in outer membrane invagination during cell division and is important for maintaining outer membrane integrity. This Burkholderia pseudomallei (strain 1710b) protein is Tol-Pal system protein TolB.